Consider the following 136-residue polypeptide: ATP synthase epsilon chain, chloroplastic (136 aa).

The protein belongs to the ATPase epsilon chain family. In terms of assembly, F-type ATPases have 2 components, CF(1) - the catalytic core - and CF(0) - the membrane proton channel. CF(1) has five subunits: alpha(3), beta(3), gamma(1), delta(1), epsilon(1). CF(0) has three main subunits: a, b and c.

It localises to the plastid. Its subcellular location is the chloroplast thylakoid membrane. In terms of biological role, produces ATP from ADP in the presence of a proton gradient across the membrane. This chain is ATP synthase epsilon chain, chloroplastic, found in Cucumis sativus (Cucumber).